We begin with the raw amino-acid sequence, 417 residues long: Serine hydroxymethyltransferase 1 (417 aa).

(6S)-5,6,7,8-tetrahydrofolate contacts are provided by residues Leu121 and 125–127 (GHL). At Lys229 the chain carries N6-(pyridoxal phosphate)lysine. Position 354–356 (354–356 (SPF)) interacts with (6S)-5,6,7,8-tetrahydrofolate.

Belongs to the SHMT family. Homodimer. The cofactor is pyridoxal 5'-phosphate.

It localises to the cytoplasm. The catalysed reaction is (6R)-5,10-methylene-5,6,7,8-tetrahydrofolate + glycine + H2O = (6S)-5,6,7,8-tetrahydrofolate + L-serine. It participates in one-carbon metabolism; tetrahydrofolate interconversion. The protein operates within amino-acid biosynthesis; glycine biosynthesis; glycine from L-serine: step 1/1. Catalyzes the reversible interconversion of serine and glycine with tetrahydrofolate (THF) serving as the one-carbon carrier. This reaction serves as the major source of one-carbon groups required for the biosynthesis of purines, thymidylate, methionine, and other important biomolecules. Also exhibits THF-independent aldolase activity toward beta-hydroxyamino acids, producing glycine and aldehydes, via a retro-aldol mechanism. In Pseudomonas syringae pv. syringae (strain B728a), this protein is Serine hydroxymethyltransferase 1.